The chain runs to 209 residues: High frequency lysogenization protein HflD homolog (209 aa).

Positions 95 to 132 (LERKLAASKGAMNTLGNRIADLSRQLEHFELESDTLMS) form a coiled coil.

This sequence belongs to the HflD family.

It localises to the cytoplasm. The protein resides in the cell inner membrane. The sequence is that of High frequency lysogenization protein HflD homolog from Cronobacter sakazakii (strain ATCC BAA-894) (Enterobacter sakazakii).